Here is a 197-residue protein sequence, read N- to C-terminus: Peptidyl-tRNA hydrolase (197 aa).

Tyr18 lines the tRNA pocket. His23 serves as the catalytic Proton acceptor. TRNA is bound by residues Phe69, Asn71, and Asn117.

It belongs to the PTH family. Monomer.

The protein resides in the cytoplasm. It carries out the reaction an N-acyl-L-alpha-aminoacyl-tRNA + H2O = an N-acyl-L-amino acid + a tRNA + H(+). Its function is as follows. Hydrolyzes ribosome-free peptidyl-tRNAs (with 1 or more amino acids incorporated), which drop off the ribosome during protein synthesis, or as a result of ribosome stalling. Functionally, catalyzes the release of premature peptidyl moieties from peptidyl-tRNA molecules trapped in stalled 50S ribosomal subunits, and thus maintains levels of free tRNAs and 50S ribosomes. The polypeptide is Peptidyl-tRNA hydrolase (Psychromonas ingrahamii (strain DSM 17664 / CCUG 51855 / 37)).